The chain runs to 369 residues: tRNA pseudouridine synthase D (369 aa).

The active-site Nucleophile is the aspartate 80. One can recognise a TRUD domain in the interval 156-318 (GIPNWFGEQR…LKQERRALRL (163 aa)).

It belongs to the pseudouridine synthase TruD family.

The enzyme catalyses uridine(13) in tRNA = pseudouridine(13) in tRNA. In terms of biological role, responsible for synthesis of pseudouridine from uracil-13 in transfer RNAs. In Xanthomonas oryzae pv. oryzae (strain KACC10331 / KXO85), this protein is tRNA pseudouridine synthase D.